Reading from the N-terminus, the 172-residue chain is L-amino acid N-acyltransferase MnaT (172 aa).

Positions 1 to 163 (MSIRFARKAD…DLTFMQLQLD (163 aa)) constitute an N-acetyltransferase domain. Residues 85–87 (VYV), 93–98 (GKGLGR), N124, and S133 contribute to the acetyl-CoA site.

This sequence belongs to the acetyltransferase family. PAT/BAR subfamily.

The catalysed reaction is L-methionine + acetyl-CoA = N-acetyl-L-methionine + CoA + H(+). The enzyme catalyses propanoyl-CoA + L-methionine = N-propanoyl-L-methioninate + CoA + H(+). It carries out the reaction L-alpha-phenylglycine + acetyl-CoA = N-acetyl-L-alpha-phenylglycine + CoA + H(+). It catalyses the reaction L-methionine sulfoximine + acetyl-CoA = N-acetyl-L-methionine sulfoximine + CoA + H(+). The catalysed reaction is L-methionine sulfone + acetyl-CoA = N-acetyl-L-methionine sulfone + CoA + H(+). Its function is as follows. Acyltransferase that appears to be required for E.coli optimal growth rate and yield via the formation of N-acetylated amino acids. Catalyzes the acylation of L-methionine using acetyl-CoA or propanoyl-CoA as acyl donors, and the acetylation of L-phenylglycine. Is also able to N-acylate other free L-amino acids and their derivatives using a CoA thioester as cosubstrate. Using acetyl-CoA as an acyl donor, substrate specificity is methionine sulfone &gt; methionine sulfoximine &gt; methionine sulfoxide &gt; methionine. Asparagine, lysine, glutamine, aspartate and glutamate are very poor substrates. Using methionine as a substrate, acyl donor preference is propanoyl-CoA &gt; acetyl-CoA &gt;&gt; butyryl-CoA. Likely plays a role in the resistance against the toxic effects of L-methionine sulfoximine (MSX), via its ability to catalyze its acetylation; MSX is a rare amino acid which inhibits glutamine synthetase (GlnA). This is L-amino acid N-acyltransferase MnaT from Escherichia coli (strain K12).